A 926-amino-acid chain; its full sequence is MAFLIILITCFVIILATSQPCQTPDDFVAATSPGHIIIGGLFAIHEKMLSSEDSPRRPQIQECVGFEISVFLQTLAMIHSIEMINNSTLLPGVKLGYEIYDTCTEVTVAMAATLRFLSKFNCSRETVEFKCDYSSYMPRVKAVIGSGYSEITMAVSRMLNLQLMPQVGYESTAEILSDKIRFPSFLRTVPSDFHQIKAMAHLIQKSGWNWIGIITTDDDYGRLALNTFIIQAEANNVCIAFKEVLPAFLSDNTIEVRINRTLKKIILEAQVNVIVVFLRQFHVFDLFNKAIEMNINKMWIASDNWSTATKITTIPNVKKIGKVVGFAFRRGNISSFHSFLQNLHLLPSDSHKLLHEYAMHLSACAYVKDTDLSQCIFNHSQRTLAYKANKAIERNFVMRNDFLWDYAEPGLIHSIQLAVFALGYAIRDLCQARDCQNPNAFQPWELLGVLKNVTFTDGWNSFHFDAHGDLNTGYDVVLWKEINGHMTVTKMAEYDLQNDVFIIPDQETKNEFRNLKQIQSKCSKECSPGQMKKTTRSQHICCYECQNCPENHYTNQTDMPHCLLCNNKTHWAPVRSTMCFEKEVEYLNWNDSLAILLLILSLLGIIFVLVVGIIFTRNLNTPVVKSSGGLRVCYVILLCHFLNFASTSFFIGEPQDFTCKTRQTMFGVSFTLCISCILTKSLKILLAFSFDPKLQKFLKCLYRPILIIFTCTGIQVVICTLWLIFAAPTVEVNVSLPRVIILECEEGSILAFGTMLGYIAILAFICFIFAFKGKYENYNEAKFITFGMLIYFIAWITFIPIYATTFGKYVPAVEIIVILISNYGILYCTFIPKCYVIICKQEINTKSAFLKMIYSYSSHSVSSIALSPASLDSMSGNVTMTNPSSSGKSATWQKSKDLQAQAFAHICRENATSVSKTLPRKRMSSI.

The first 18 residues, 1-18 (MAFLIILITCFVIILATS), serve as a signal peptide directing secretion. Over 19–594 (QPCQTPDDFV…EYLNWNDSLA (576 aa)) the chain is Extracellular. N-linked (GlcNAc...) asparagine glycans are attached at residues asparagine 121, asparagine 259, asparagine 332, asparagine 378, asparagine 452, asparagine 555, asparagine 567, and asparagine 590. The chain crosses the membrane as a helical span at residues 595–615 (ILLLILSLLGIIFVLVVGIIF). At 616–631 (TRNLNTPVVKSSGGLR) the chain is on the cytoplasmic side. A helical transmembrane segment spans residues 632 to 652 (VCYVILLCHFLNFASTSFFIG). The Extracellular portion of the chain corresponds to 653–669 (EPQDFTCKTRQTMFGVS). A helical membrane pass occupies residues 670 to 690 (FTLCISCILTKSLKILLAFSF). Residues 691-704 (DPKLQKFLKCLYRP) lie on the Cytoplasmic side of the membrane. Residues 705–725 (ILIIFTCTGIQVVICTLWLIF) form a helical membrane-spanning segment. Residues 726-748 (AAPTVEVNVSLPRVIILECEEGS) lie on the Extracellular side of the membrane. Asparagine 733 carries N-linked (GlcNAc...) asparagine glycosylation. A helical membrane pass occupies residues 749–769 (ILAFGTMLGYIAILAFICFIF). Residues 770–782 (AFKGKYENYNEAK) are Cytoplasmic-facing. A helical membrane pass occupies residues 783-803 (FITFGMLIYFIAWITFIPIYA). The Extracellular segment spans residues 804-810 (TTFGKYV). A helical membrane pass occupies residues 811-831 (PAVEIIVILISNYGILYCTFI). The Cytoplasmic portion of the chain corresponds to 832–926 (PKCYVIICKQ…TLPRKRMSSI (95 aa)).

It belongs to the G-protein coupled receptor 3 family. In terms of assembly, homodimer; disulfide-linked. In terms of tissue distribution, isoform 1 is expressed at high level in brain, skeletal muscle, testis, bone, calvaria, osteoblasts and leukocytes. Expressed at intermediate level in liver, heart, kidney and spleen. Expressed at low level in lung, pancreas, placenta and ovary. Not detected in thymus, prostate, small intestine, tongue and colon. Isoform 1 and isoform 2 are expressed in kidney at the same level. Isoform 2 is expressed at lower level than isoform 1 in the other tissues.

It is found in the cell membrane. Functionally, receptor activated by multiple ligands, including osteocalcin (BGLAP), basic amino acids, and various cations. Activated by amino acids with a preference for basic amino acids such as L-Lys, L-Arg and L-ornithine but also by small and polar amino acids. The L-alpha amino acids respond is augmented by divalent cations Ca(2+) and Mg(2+). Seems to act through a G(q)/G(11) and G(i)-coupled pathway. Regulates testosterone production by acting as a ligand for uncarboxylated osteocalcin hormone: osteocalcin-binding at the surface of Leydig cells initiates a signaling response that promotes the expression of enzymes required for testosterone synthesis in a CREB-dependent manner. Mediates the non-genomic effects of androgens in multiple tissue. May coordinate nutritional and hormonal anabolic signals through the sensing of extracellular amino acids, osteocalcin, divalent ions and its responsiveness to anabolic steroids. The protein is G-protein coupled receptor family C group 6 member A (GPRC6A) of Homo sapiens (Human).